A 192-amino-acid chain; its full sequence is Molybdenum cofactor guanylyltransferase (192 aa).

Positions 21, 67, and 101 each coordinate GTP. D101 provides a ligand contact to Mg(2+).

The protein belongs to the MobA family. In terms of assembly, monomer. The cofactor is Mg(2+).

The protein localises to the cytoplasm. It carries out the reaction Mo-molybdopterin + GTP + H(+) = Mo-molybdopterin guanine dinucleotide + diphosphate. Functionally, transfers a GMP moiety from GTP to Mo-molybdopterin (Mo-MPT) cofactor (Moco or molybdenum cofactor) to form Mo-molybdopterin guanine dinucleotide (Mo-MGD) cofactor. The chain is Molybdenum cofactor guanylyltransferase from Neisseria meningitidis serogroup C / serotype 2a (strain ATCC 700532 / DSM 15464 / FAM18).